The primary structure comprises 88 residues: ATP synthase subunit c 2 (88 aa).

The next 2 membrane-spanning stretches (helical) occupy residues 4–24 (FSWVMITAGFGMAIGSLGTGI) and 53–73 (IGLAMIESLAIYVFVVAMIIL).

Belongs to the ATPase C chain family. As to quaternary structure, F-type ATPases have 2 components, F(1) - the catalytic core - and F(0) - the membrane proton channel. F(1) has five subunits: alpha(3), beta(3), gamma(1), delta(1), epsilon(1). F(0) has three main subunits: a(1), b(2) and c(10-14). The alpha and beta chains form an alternating ring which encloses part of the gamma chain. F(1) is attached to F(0) by a central stalk formed by the gamma and epsilon chains, while a peripheral stalk is formed by the delta and b chains.

The protein resides in the cell inner membrane. In terms of biological role, f(1)F(0) ATP synthase produces ATP from ADP in the presence of a proton or sodium gradient. F-type ATPases consist of two structural domains, F(1) containing the extramembraneous catalytic core and F(0) containing the membrane proton channel, linked together by a central stalk and a peripheral stalk. During catalysis, ATP synthesis in the catalytic domain of F(1) is coupled via a rotary mechanism of the central stalk subunits to proton translocation. Functionally, key component of the F(0) channel; it plays a direct role in translocation across the membrane. A homomeric c-ring of between 10-14 subunits forms the central stalk rotor element with the F(1) delta and epsilon subunits. This Syntrophotalea carbinolica (strain DSM 2380 / NBRC 103641 / GraBd1) (Pelobacter carbinolicus) protein is ATP synthase subunit c 2.